Reading from the N-terminus, the 590-residue chain is V-type ATP synthase alpha chain (590 aa).

231 to 238 (GPFGSGKT) lines the ATP pocket.

Belongs to the ATPase alpha/beta chains family.

The catalysed reaction is ATP + H2O + 4 H(+)(in) = ADP + phosphate + 5 H(+)(out). In terms of biological role, produces ATP from ADP in the presence of a proton gradient across the membrane. The V-type alpha chain is a catalytic subunit. The sequence is that of V-type ATP synthase alpha chain from Clostridium botulinum (strain ATCC 19397 / Type A).